Here is a 356-residue protein sequence, read N- to C-terminus: MTKSYSESGLMGEPQPQGPPSWTDECLSSQDEEHEADKKEDDLETMNAEEDSLRNGGEEEDEDEDLEEEEEEEEEDDDQKPKRRGPKKKKMTKARLERFKLRRMKANARERNRMHGLNAALDNLRKVVPCYSKTQKLSKIETLRLAKNYIWALSEILRSGKSPDLVSFVQTLCKGLSQPTTNLVAGCLQLNPRTFLPEQNQDMPPHLPTASASFPVHPYSYQSPGLPSPPYGTMDSSHVFHVKPPPHAYSAALEPFFESPLTDCTSPSFDGPLSPPLSINGNFSFKHEPSAEFEKNYAFTMHYPAATLAGAQSHGSIFSGTAAPRCEIPIDNIMSFDSHSHHERVMSAQLNAIFHD.

The interval 1–94 (MTKSYSESGL…GPKKKKMTKA (94 aa)) is disordered. The segment covering 58 to 78 (EEEDEDEDLEEEEEEEEEDDD) has biased composition (acidic residues). The segment covering 81–93 (PKRRGPKKKKMTK) has biased composition (basic residues). Positions 87–93 (KKKKMTK) match the Nuclear localization signal motif. Positions 101-153 (LRRMKANARERNRMHGLNAALDNLRKVVPCYSKTQKLSKIETLRLAKNYIWAL) constitute a bHLH domain. A phosphoserine mark is found at Ser-162, Ser-259, Ser-266, and Ser-274. Ser-335 carries the phosphoserine; by CaMK2 modification.

Efficient DNA-binding requires dimerization with another bHLH protein. Heterodimer with TCF3/E47; the heterodimer is inhibited in presence of ID2, but not NR0B2, to E-box element. Interacts with EP300; the interaction is inhibited by NR0B2. Interacts with RREB1. Interacts with ATOH8. Phosphorylated. In islet cells, phosphorylated on Ser-274 upon glucose stimulation; which may be required for nuclear localization. In activated neurons, phosphorylated on Ser-335; which promotes dendritic growth. Phosphorylated by MAPK1; phosphorylation regulates heterodimerization and DNA-binding activities. Phosphorylation on Ser-266 and Ser-274 increases transactivation on the insulin promoter in glucose-stimulated insulinoma cells.

Its subcellular location is the cytoplasm. It localises to the nucleus. Functionally, acts as a transcriptional activator: mediates transcriptional activation by binding to E box-containing promoter consensus core sequences 5'-CANNTG-3'. Associates with the p300/CBP transcription coactivator complex to stimulate transcription of the secretin gene as well as the gene encoding the cyclin-dependent kinase inhibitor CDKN1A. Contributes to the regulation of several cell differentiation pathways, like those that promote the formation of early retinal ganglion cells, inner ear sensory neurons, granule cells forming either the cerebellum or the dentate gyrus cell layer of the hippocampus, endocrine islet cells of the pancreas and enteroendocrine cells of the small intestine. Together with PAX6 or SIX3, is required for the regulation of amacrine cell fate specification. Also required for dendrite morphogenesis and maintenance in the cerebellar cortex. Associates with chromatin to enhancer regulatory elements in genes encoding key transcriptional regulators of neurogenesis. In Homo sapiens (Human), this protein is Neurogenic differentiation factor 1 (NEUROD1).